We begin with the raw amino-acid sequence, 232 residues long: MTATKMNAQEIIQFIANAEKKTSVKVTFEGQLATAVPSSVVKLGNVLFGDWKDVAPLLEGLVENQDYVVEQDARNSAVPLLDKRAINARIEPGAIIRDQVEIGDNAVIMMGAVINIGAEIGAGTMIDMGAILGGRAIVGKNSHVGAGAVLAGVIEPASAEPVRVGDNVLIGANAVVIEGVQIGSGSVVAAGAIVTQDVPENVVVAGVPARIIKEIDAQTQQKTALEDALRTL.

The protein belongs to the transferase hexapeptide repeat family. DapH subfamily.

It catalyses the reaction (S)-2,3,4,5-tetrahydrodipicolinate + acetyl-CoA + H2O = L-2-acetamido-6-oxoheptanedioate + CoA. It participates in amino-acid biosynthesis; L-lysine biosynthesis via DAP pathway; LL-2,6-diaminopimelate from (S)-tetrahydrodipicolinate (acetylase route): step 1/3. Catalyzes the transfer of an acetyl group from acetyl-CoA to tetrahydrodipicolinate. In Streptococcus pneumoniae serotype 2 (strain D39 / NCTC 7466), this protein is 2,3,4,5-tetrahydropyridine-2,6-dicarboxylate N-acetyltransferase.